Consider the following 196-residue polypeptide: uncharacterized protein (196 aa).

Positions 21-35 (ESRRKDGSVRRERAV) are enriched in basic and acidic residues. Disordered stretches follow at residues 21–53 (ESRRKDGSVRRERAVKPGYTAPEDIKRYRPGRG) and 65–196 (LQLS…KEKE). The span at 66 to 75 (QLSNDASTSK) shows a compositional bias: polar residues. Basic and acidic residues-rich tracts occupy residues 84–94 (ELEKEKLERPL), 100–143 (EKND…KDFK), and 173–196 (KMSKRENKKSINTVDKKTGYKEKE).

This is an uncharacterized protein from Schizosaccharomyces pombe (strain 972 / ATCC 24843) (Fission yeast).